Reading from the N-terminus, the 173-residue chain is Photosystem I assembly protein Ycf3 (173 aa).

TPR repeat units lie at residues 35–68, 72–105, and 120–153; these read AFYYYKDGMAAQSEGEYAEALACYYQALKIEKDP, SFILYNIGLIQASNGQHARALEYYHESLKFNPNL, and GNKLFEQSKLQEAKLMFDKASNYWRKAIKLAPYN.

This sequence belongs to the Ycf3 family.

It is found in the plastid. The protein resides in the chloroplast thylakoid membrane. Its function is as follows. Essential for the assembly of the photosystem I (PSI) complex. May act as a chaperone-like factor to guide the assembly of the PSI subunits. The polypeptide is Photosystem I assembly protein Ycf3 (Cyanidium caldarium (Red alga)).